The sequence spans 1174 residues: RecBCD enzyme subunit RecB (1174 aa).

The segment at 1-852 (MKIDSLKEKL…GGKTMNYEGL (852 aa)) is DNA-binding and helicase activity, interacts with RecC. Residues 4–449 (DSLKEKLNIF…YYLDTNWRSS (446 aa)) form the UvrD-like helicase ATP-binding domain. 25–32 (ASAGTGKT) contacts ATP. Residues 479–745 (PSSKNLKMNF…KIITIHKSKG (267 aa)) enclose the UvrD-like helicase C-terminal domain. The interval 900–1174 (TWSITSFSQL…LIKKTMTLIS (275 aa)) is nuclease activity, interacts with RecD and RecA. Mg(2+) contacts are provided by His-957, Asp-1068, and Asp-1081. Asp-1081 serves as the catalytic For nuclease activity.

Belongs to the helicase family. UvrD subfamily. As to quaternary structure, heterotrimer of RecB, RecC and RecD. All subunits contribute to DNA-binding. Interacts with RecA. Mg(2+) is required as a cofactor.

It catalyses the reaction Exonucleolytic cleavage (in the presence of ATP) in either 5'- to 3'- or 3'- to 5'-direction to yield 5'-phosphooligonucleotides.. The enzyme catalyses Couples ATP hydrolysis with the unwinding of duplex DNA by translocating in the 3'-5' direction.. The catalysed reaction is ATP + H2O = ADP + phosphate + H(+). Functionally, a helicase/nuclease that prepares dsDNA breaks (DSB) for recombinational DNA repair. Binds to DSBs and unwinds DNA via a highly rapid and processive ATP-dependent bidirectional helicase activity. Unwinds dsDNA until it encounters a Chi (crossover hotspot instigator) sequence from the 3' direction. Cuts ssDNA a few nucleotides 3' to the Chi site. The properties and activities of the enzyme are changed at Chi. The Chi-altered holoenzyme produces a long 3'-ssDNA overhang and facilitates RecA-binding to the ssDNA for homologous DNA recombination and repair. Holoenzyme degrades any linearized DNA that is unable to undergo homologous recombination. In the holoenzyme this subunit contributes ATPase, 3'-5' helicase, exonuclease activity and loads RecA onto ssDNA. This is RecBCD enzyme subunit RecB from Buchnera aphidicola subsp. Acyrthosiphon pisum (strain APS) (Acyrthosiphon pisum symbiotic bacterium).